The following is a 92-amino-acid chain: Small ribosomal subunit protein uS19c (92 aa).

Belongs to the universal ribosomal protein uS19 family.

It is found in the plastid. The protein resides in the chloroplast. Its function is as follows. Protein S19 forms a complex with S13 that binds strongly to the 16S ribosomal RNA. The chain is Small ribosomal subunit protein uS19c from Lemna minor (Common duckweed).